The chain runs to 360 residues: Histidinol-phosphate aminotransferase (360 aa).

Position 218 is an N6-(pyridoxal phosphate)lysine (K218).

This sequence belongs to the class-II pyridoxal-phosphate-dependent aminotransferase family. Histidinol-phosphate aminotransferase subfamily. In terms of assembly, homodimer. Pyridoxal 5'-phosphate is required as a cofactor.

It catalyses the reaction L-histidinol phosphate + 2-oxoglutarate = 3-(imidazol-4-yl)-2-oxopropyl phosphate + L-glutamate. Its pathway is amino-acid biosynthesis; L-histidine biosynthesis; L-histidine from 5-phospho-alpha-D-ribose 1-diphosphate: step 7/9. The polypeptide is Histidinol-phosphate aminotransferase (Chlorobium phaeovibrioides (strain DSM 265 / 1930) (Prosthecochloris vibrioformis (strain DSM 265))).